The primary structure comprises 567 residues: Glutamine--tRNA ligase (567 aa).

Residues 47–57 (PEPNGYLHIGH) carry the 'HIGH' region motif. ATP is bound by residues 48 to 50 (EPN) and 54 to 60 (HIGHAKS). Positions 80 and 225 each coordinate L-glutamine. ATP-binding positions include T244 and 274 to 275 (RL). The 'KMSKS' region motif lies at 281-285 (ITSKR).

This sequence belongs to the class-I aminoacyl-tRNA synthetase family. In terms of assembly, monomer.

The protein resides in the cytoplasm. The enzyme catalyses tRNA(Gln) + L-glutamine + ATP = L-glutaminyl-tRNA(Gln) + AMP + diphosphate. The polypeptide is Glutamine--tRNA ligase (Pseudomonas putida (strain ATCC 47054 / DSM 6125 / CFBP 8728 / NCIMB 11950 / KT2440)).